The primary structure comprises 67 residues: Ceratotoxin-C (67 aa).

An N-terminal signal peptide occupies residues 1–23; the sequence is MANIKAVFLICIVAFIAFHCVVA. A propeptide spanning residues 24-35 is cleaved from the precursor; that stretch reads EPTAEDSVVVKR.

As to quaternary structure, homomer of four to six subunits.

Its subcellular location is the secreted. Female-specific peptides with potent activity against Gram-positive and Gram-negative bacteria. They have as well hemolytic activity. In Ceratitis capitata (Mediterranean fruit fly), this protein is Ceratotoxin-C (CTXC1).